We begin with the raw amino-acid sequence, 470 residues long: MKINSPLEAYKYLPQTNCGECGQPTCMAFASTLIDRSGKTTDCPPLIKEKKFAKKLAELDRLLAPEIRQVTIGVGERAANIGGDDVLYRHKLTFFNKTKMFFDVADNMDEAAIVERVKKISDYKKFYVGRNLLLDGVAIRAASNDPAKFATAVKKVIENTELPVILCSFNPAVLKAGLEVAKGKNPLLYAANKDNWKEVGELALEYNVPVVVSAFNDLDGLKTLAKTFAEAGIKDIVLDPGTYPTGKGLKDTFTNFLKIRRAGIMGDTEIAYPIMAMPLTAWMAGIADPVSASYWETVLSSIFTIRYGDIMLLHSMEPYATMPEVHLAETIYTDPRSPVAVDSKMYKVGNPTADSPVLFTTNFALTYYTVESDLASNGIDCWLLAVNTDGIGVEAAAAGGQLTADKVKDAFEKSGFDLKSDVTHNSVVIPGLAARLQGDIEDKLNVKVMVGPMDSGRLPGWMEKNWPPKK.

Residues 1–60 (MKINSPLEAYKYLPQTNCGECGQPTCMAFASTLIDRSGKTTDCPPLIKEKKFAKKLAELD) enclose the 4Fe-4S domain. Residues cysteine 18, cysteine 21, cysteine 26, and cysteine 43 each contribute to the [4Fe-4S] cluster site.

Heterodimer of delta and gamma chains. The ACDS complex is made up of alpha, epsilon, beta, gamma and delta chains with a probable stoichiometry of (alpha(2)epsilon(2))(4)-beta(8)-(gamma(1)delta(1))(8). Requires corrinoid as cofactor. It depends on [4Fe-4S] cluster as a cofactor.

It carries out the reaction 5,6,7,8-tetrahydrosarcinapterin + methyl-Co(III)-[corrinoid Fe-S protein] = 5-methyltetrahydrosarcinapterin + Co(I)-[corrinoid Fe-S protein] + H(+). The protein operates within one-carbon metabolism; methanogenesis from acetate. Part of a complex that catalyzes the reversible cleavage of acetyl-CoA, allowing growth on acetate as sole source of carbon and energy. The polypeptide is Acetyl-CoA decarbonylase/synthase complex subunit gamma 2 (Methanosarcina mazei (strain ATCC BAA-159 / DSM 3647 / Goe1 / Go1 / JCM 11833 / OCM 88) (Methanosarcina frisia)).